The primary structure comprises 117 residues: UPF0102 protein FTF0898c (117 aa).

The protein belongs to the UPF0102 family.

The sequence is that of UPF0102 protein FTF0898c from Francisella tularensis subsp. tularensis (strain FSC 198).